Reading from the N-terminus, the 406-residue chain is 5-cytosine rRNA methyltransferase NSUN4 (406 aa).

S-adenosyl-L-methionine is bound by residues G207, G208, K209, D226, R231, D259, G260, and D277. The active-site Nucleophile is C332.

This sequence belongs to the class I-like SAM-binding methyltransferase superfamily. RsmB/NOP family.

Its subcellular location is the mitochondrion. It catalyses the reaction a cytidine in rRNA + S-adenosyl-L-methionine = a 5-methylcytidine in rRNA + S-adenosyl-L-homocysteine + H(+). The enzyme catalyses a cytidine in mRNA + S-adenosyl-L-methionine = a 5-methylcytidine in mRNA + S-adenosyl-L-homocysteine + H(+). Mitochondrial RNA cytosine C(5)-methyltransferase that methylates cytosine to 5-methylcytosine (m5C) in various RNAs, such as rRNAs, mRNAs and some long non-coding RNAs (lncRNAs). Involved in mitochondrial ribosome small subunit (SSU) maturation by catalyzing methylation of mitochondrial 12S rRNA. This is 5-cytosine rRNA methyltransferase NSUN4 (nsun4) from Xenopus laevis (African clawed frog).